The primary structure comprises 350 residues: Histidinol-phosphate aminotransferase (350 aa).

Lys220 carries the N6-(pyridoxal phosphate)lysine modification.

Belongs to the class-II pyridoxal-phosphate-dependent aminotransferase family. Histidinol-phosphate aminotransferase subfamily. In terms of assembly, homodimer. It depends on pyridoxal 5'-phosphate as a cofactor.

The catalysed reaction is L-histidinol phosphate + 2-oxoglutarate = 3-(imidazol-4-yl)-2-oxopropyl phosphate + L-glutamate. Its pathway is amino-acid biosynthesis; L-histidine biosynthesis; L-histidine from 5-phospho-alpha-D-ribose 1-diphosphate: step 7/9. This is Histidinol-phosphate aminotransferase from Macrococcus caseolyticus (strain JCSC5402) (Macrococcoides caseolyticum).